The sequence spans 323 residues: Serine/threonine-protein phosphatase PP1-gamma catalytic subunit (323 aa).

An N-acetylalanine modification is found at Ala-2. Mn(2+) contacts are provided by Asp-64, His-66, Asp-92, and Asn-124. The Proton donor role is filled by His-125. His-173 and His-248 together coordinate Mn(2+). The segment at 302-323 (KKPNATRPVTPPRGMITKQAKK) is disordered. Thr-307 and Thr-311 each carry phosphothreonine.

This sequence belongs to the PPP phosphatase family. PP-1 subfamily. PP1 comprises a catalytic subunit, PPP1CA, PPP1CB or PPP1CC, which is folded into its native form by inhibitor 2 and glycogen synthetase kinase 3, and then complexed to one or several targeting or regulatory subunits. PPP1R12A, PPP1R12B and PPP1R12C mediate binding to myosin. PPP1R3A (in skeletal muscle), PPP1R3B (in liver), PPP1R3C, PPP1R3D and PPP1R3F (in brain) mediate binding to glycogen. Interacts with cyanobacterial toxin microcystin; disulfide-linked. Interacts with PPP1R3B and PPP1R7. Isoform 2 interacts with SPZ1. Interacts with CDCA2. PPP1R15A and PPP1R15B mediate binding to EIF2S1. Part of a complex containing PPP1R15B, PP1 and NCK1/2. Interacts with IKFZ1; the interaction targets PPP1CC to pericentromeric heterochromatin, dephosphorylates IKAROS, stabilizes it and prevents it from degradation. Interacts with PPP1R42; the interaction is direct. Interacts with NOM1 and PPP1R8. Component of the PTW/PP1 phosphatase complex, composed of PPP1R10/PNUTS, TOX4, WDR82, and PPP1CA or PPP1CB or PPP1CC. Interacts with PPP1R8. Interacts with isoform 1 and isoform 4 NEK2. Interacts with URI1; the interaction is phosphorylation-dependent and occurs in a growth factor-dependent manner. Interacts with FOXP3. Interacts with TMEM225 (via RVxF motif). Interacts with MKI67. Interacts with RRP1B; this targets PPP1CC to the nucleolus. Interacts with PPP1R2B. Found in a complex with PPP1CA, PPP1CC, SHC1 and PEAK1. Interacts with DYNLT4. Interacts (via RVxF motif) with FIRRM; regulates PLK1 kinase activity. Interacts with the KNL1 complex subunit KNL1; the interaction is direct and mutually exclusive with KNL1 binding to microtubules. Component of the SHOC2-MRAS-PP1c (SMP) complex consisting of SHOC2, GTP-bound M-Ras/MRAS and the catalytic subunit of protein phosphatase 1 (either PPP1CA, PPP1CB or PPP1CC). SHOC2 and PP1c preferably bind M-Ras/MRAS, but they also bind K-Ras/KRAS, N-Ras/NRAS and H-Ras/HRAS; these interactions are GTP-dependent and both SHOC2 and PP1c are required to form a stable complex. Interacts with SHOC2 in the absence of Ras GTPases. Requires Mn(2+) as cofactor. Phosphorylated by NEK2.

The protein resides in the cytoplasm. Its subcellular location is the nucleus. It localises to the nucleolus. It is found in the nucleoplasm. The protein localises to the nucleus speckle. The protein resides in the chromosome. Its subcellular location is the centromere. It localises to the kinetochore. It is found in the cleavage furrow. The protein localises to the midbody. The protein resides in the mitochondrion. Its subcellular location is the cytoskeleton. It localises to the microtubule organizing center. The catalysed reaction is O-phospho-L-seryl-[protein] + H2O = L-seryl-[protein] + phosphate. The enzyme catalyses O-phospho-L-threonyl-[protein] + H2O = L-threonyl-[protein] + phosphate. With respect to regulation, inactivated by binding to URI1. The phosphatase activity of the PPP1R15A-PP1 complex toward EIF2S1 is specifically inhibited by Salubrinal, a drug that protects cells from endoplasmic reticulum stress. Protein phosphatase that associates with over 200 regulatory proteins to form highly specific holoenzymes which dephosphorylate hundreds of biological targets. Protein phosphatase 1 (PP1) is essential for cell division, and participates in the regulation of glycogen metabolism, muscle contractility and protein synthesis. Dephosphorylates RPS6KB1. Involved in regulation of ionic conductances and long-term synaptic plasticity. May play an important role in dephosphorylating substrates such as the postsynaptic density-associated Ca(2+)/calmodulin dependent protein kinase II. Component of the PTW/PP1 phosphatase complex, which plays a role in the control of chromatin structure and cell cycle progression during the transition from mitosis into interphase. In balance with CSNK1D and CSNK1E, determines the circadian period length, through the regulation of the speed and rhythmicity of PER1 and PER2 phosphorylation. May dephosphorylate CSNK1D and CSNK1E. Regulates the recruitment of the SKA complex to kinetochores. Dephosphorylates the 'Ser-418' residue of FOXP3 in regulatory T-cells (Treg) from patients with rheumatoid arthritis, thereby inactivating FOXP3 and rendering Treg cells functionally defective. Together with PPP1CA (PP1-alpha subunit), dephosphorylates IFIH1/MDA5 and RIG-I leading to their activation and a functional innate immune response. Core component of the SHOC2-MRAS-PP1c (SMP) holophosphatase complex that regulates the MAPK pathway activation. The SMP complex specifically dephosphorylates the inhibitory phosphorylation at 'Ser-259' of RAF1 kinase, 'Ser-365' of BRAF kinase and 'Ser-214' of ARAF kinase, stimulating their kinase activities. Dephosphorylates MKI67 at the onset of anaphase. The SMP complex enhances the dephosphorylation activity and substrate specificity of PP1c. In Homo sapiens (Human), this protein is Serine/threonine-protein phosphatase PP1-gamma catalytic subunit (PPP1CC).